The primary structure comprises 316 residues: Olfactory receptor 8J1 (316 aa).

The Extracellular segment spans residues 1–25 (MAPENFTRVTEFILTGVSSCPELQI). A glycan (N-linked (GlcNAc...) asparagine) is linked at asparagine 5. A helical transmembrane segment spans residues 26 to 46 (PLFLVFLVLYGLTMAGNLGII). At 47-54 (TLTSVDSR) the chain is on the cytoplasmic side. The helical transmembrane segment at 55 to 75 (LQTPMYFFLQHLALINLGNST) threads the bilayer. Topologically, residues 76 to 99 (VIAPKMLINFLVKKKTTSFYECAT) are extracellular. Residues cysteine 97 and cysteine 189 are joined by a disulfide bond. A helical membrane pass occupies residues 100–120 (QLGGFLFFIVSEVIMLALMAY). Residues 121-139 (DRYVAICNPLLYMVVVSRR) lie on the Cytoplasmic side of the membrane. The helical transmembrane segment at 140-160 (LCLLLVSLTYLYGFSTAIVVS) threads the bilayer. Over 161 to 197 (SYVFSVSYCSSNIINHFYCDNVPLLALSCSDTYLPET) the chain is Extracellular. The helical transmembrane segment at 198 to 217 (VVFISAATNVVGSLIIVLVS) threads the bilayer. The Cytoplasmic portion of the chain corresponds to 218-237 (YFNIVLSILKICSSEGRKKA). The helical transmembrane segment at 238 to 258 (FSTCASHMMAVTIFYGTLLFM) threads the bilayer. The Extracellular segment spans residues 259–272 (YVQPRSNHSLDTDD). The helical transmembrane segment at 273–293 (KMASVFYTLVIPMLNPLIYSL) threads the bilayer. At 294–316 (RNKDVKTALQRFMTNLCYSFKTM) the chain is on the cytoplasmic side.

Belongs to the G-protein coupled receptor 1 family.

Its subcellular location is the cell membrane. Its function is as follows. Odorant receptor. In Homo sapiens (Human), this protein is Olfactory receptor 8J1 (OR8J1).